A 420-amino-acid polypeptide reads, in one-letter code: Serine hydroxymethyltransferase (420 aa).

(6S)-5,6,7,8-tetrahydrofolate is bound by residues Leu117 and 121–123 (GHL). Lys226 bears the N6-(pyridoxal phosphate)lysine mark.

This sequence belongs to the SHMT family. Homodimer. Pyridoxal 5'-phosphate is required as a cofactor.

The protein resides in the cytoplasm. It carries out the reaction (6R)-5,10-methylene-5,6,7,8-tetrahydrofolate + glycine + H2O = (6S)-5,6,7,8-tetrahydrofolate + L-serine. The protein operates within one-carbon metabolism; tetrahydrofolate interconversion. It participates in amino-acid biosynthesis; glycine biosynthesis; glycine from L-serine: step 1/1. Catalyzes the reversible interconversion of serine and glycine with tetrahydrofolate (THF) serving as the one-carbon carrier. This reaction serves as the major source of one-carbon groups required for the biosynthesis of purines, thymidylate, methionine, and other important biomolecules. Also exhibits THF-independent aldolase activity toward beta-hydroxyamino acids, producing glycine and aldehydes, via a retro-aldol mechanism. The sequence is that of Serine hydroxymethyltransferase from Rhodopirellula baltica (strain DSM 10527 / NCIMB 13988 / SH1).